The primary structure comprises 140 residues: Histone H2B.1, sperm (140 aa).

Residues 1 to 47 (MPSQRSPTKRSPTKRSPQKGAGKGGKGSKRGGKARRRGGAAVRRRRR) form a disordered region. 3 short sequence motifs (SPKK motif) span residues 6–9 (SPTK), 11–14 (SPTK), and 16–19 (SPQK). Composition is skewed to basic residues over residues 7–17 (PTKRSPTKRSP) and 26–47 (KGSK…RRRR). Phosphoserine is present on residues Ser-11 and Ser-16. A glycan (O-linked (GlcNAc) serine) is linked at Ser-127. Lys-135 is covalently cross-linked (Glycyl lysine isopeptide (Lys-Gly) (interchain with G-Cter in ubiquitin)).

It belongs to the histone H2B family. In terms of assembly, the nucleosome is a histone octamer containing two molecules each of H2A, H2B, H3 and H4 assembled in one H3-H4 heterotetramer and two H2A-H2B heterodimers. The octamer wraps approximately 147 bp of DNA. Post-translationally, monoubiquitination of Lys-135 gives a specific tag for epigenetic transcriptional activation and is also prerequisite for histone H3 'Lys-4' and 'Lys-79' methylation. Phosphorylated on SPKK motifs 2 and 3; which may regulate DNA binding. Dephosphorylated during maturation of spermatids to mature sperm and rephosphorylated at fertilization. In terms of processing, glcNAcylation at Ser-127 promotes monoubiquitination of Lys-135. It fluctuates in response to extracellular glucose, and associates with transcribed genes.

The protein resides in the nucleus. Its subcellular location is the chromosome. In terms of biological role, core component of nucleosome. Nucleosomes wrap and compact DNA into chromatin, limiting DNA accessibility to the cellular machineries which require DNA as a template. Histones thereby play a central role in transcription regulation, DNA repair, DNA replication and chromosomal stability. DNA accessibility is regulated via a complex set of post-translational modifications of histones, also called histone code, and nucleosome remodeling. The polypeptide is Histone H2B.1, sperm (Strongylocentrotus purpuratus (Purple sea urchin)).